The following is a 1234-amino-acid chain: Coiled-coil domain-containing protein CG32809 (1234 aa).

Basic and acidic residues predominate over residues 1 to 11 (MLIRWKSKDKS). Disordered regions lie at residues 1-88 (MLIR…HAHQ), 107-129 (KNKK…FDDD), and 330-350 (KVSM…NYEE). Residues 12–25 (ASSNQSVGGSSSSS) are compositionally biased toward low complexity. Basic and acidic residues predominate over residues 55-69 (GDERRRAMRRDDPRR). Positions 412–436 (HRIRVEHMERQLANLTGLVQKALVN) form a coiled coil. Residues 498-548 (DIQGIPKSHNPLHAAETKPTKPAIKSSTLPRTSSQERDRLKPPPPPKPIVL) are disordered. 2 coiled-coil regions span residues 565–594 (EVYN…SQAQ) and 630–666 (TRIS…EVIN). 4 disordered regions span residues 754–793 (EQRL…ALSG), 815–852 (IAQQ…DESA), 928–1011 (LHSY…PPNQ), and 1028–1070 (SANA…ESGN). Low complexity-rich tracts occupy residues 817–837 (QQQQ…QHQQ), 952–965 (TSSS…GSSS), 993–1004 (TSSRSPLASPTS), 1028–1039 (SANANANANSNA), and 1046–1068 (VGET…GNES). The stretch at 1077–1105 (VALEMRHQELLKKQKMLQEQYQRLQQMSK) forms a coiled coil.

In Drosophila melanogaster (Fruit fly), this protein is Coiled-coil domain-containing protein CG32809.